The chain runs to 262 residues: Abhydrolase domain-containing protein ACTT2-1 (262 aa).

The Peroxisomal targeting signal type 1 signature appears at 260–262; it reads SKL.

It belongs to the AB hydrolase superfamily. AKT2 hydrolase family.

The protein localises to the peroxisome. Its pathway is mycotoxin biosynthesis. Abhydrolase domain-containing protein; part of the gene clusters that mediate the biosynthesis of the host-selective toxins (HSTs) ACT-toxins responsible for brown spot of tangerine disease by the tangerine pathotype which affects tangerines and mandarins. ACT-toxins consist of three moieties, 9,10-epoxy-8-hydroxy-9-methyl-decatrienoic acid (EDA), valine and a polyketide. ACT-toxin I is toxic to both citrus and pear; toxin II the 5''-deoxy derivative of ACT-toxin I, is highly toxic to pear and slightly toxic to citrus. On cellular level, ACT-toxins affect plasma membrane of susceptible cells and cause a sudden increase in loss of K(+) after a few minutes of toxin treatment. The acyl-CoA ligase ACTT1, the hydrolase ACTT2, the enoyl-CoA hydratases ACTT3 and ACTT6, and the acyl-CoA synthetase ACTT5 are all involved in the biosynthesis of the AK-, AF- and ACT-toxin common 9,10-epoxy-8-hydroxy-9-methyl-decatrienoic acid (EDA) structural moiety. The exact role of each enzyme, and of additional enzymes identified within the AF-toxin clusters have still to be determined. On the other hand, ACTTS1 to ACTTS4 are specific to the tangerine pathotype. The function of ACTTS3 is to elongate the polyketide chain portion of ACT-toxin that is unique to this toxin. The enoyl-reductase ACTTS2 might complement the missing enoyl-reductase (ER) domain in ACTTS3 in the synthesis of the polyketide portion of ACT-toxin. The roles of the nonribosomal peptide synthetases-related proteins ACTTS1 and ACTTS4 have also still not been elucidated. The sequence is that of Abhydrolase domain-containing protein ACTT2-1 from Alternaria alternata (Alternaria rot fungus).